The sequence spans 212 residues: Uracil phosphoribosyltransferase (212 aa).

5-phospho-alpha-D-ribose 1-diphosphate is bound by residues arginine 78, arginine 103, and 130–138 (DPMLATGSS). Uracil contacts are provided by residues isoleucine 193 and 198–200 (GDA). A 5-phospho-alpha-D-ribose 1-diphosphate-binding site is contributed by aspartate 199.

The protein belongs to the UPRTase family. It depends on Mg(2+) as a cofactor.

It carries out the reaction UMP + diphosphate = 5-phospho-alpha-D-ribose 1-diphosphate + uracil. Its pathway is pyrimidine metabolism; UMP biosynthesis via salvage pathway; UMP from uracil: step 1/1. With respect to regulation, allosterically activated by GTP. Functionally, catalyzes the conversion of uracil and 5-phospho-alpha-D-ribose 1-diphosphate (PRPP) to UMP and diphosphate. This chain is Uracil phosphoribosyltransferase, found in Pseudomonas fluorescens (strain ATCC BAA-477 / NRRL B-23932 / Pf-5).